Here is a 236-residue protein sequence, read N- to C-terminus: Phosphoribosylaminoimidazole-succinocarboxamide synthase (236 aa).

The protein belongs to the SAICAR synthetase family.

It catalyses the reaction 5-amino-1-(5-phospho-D-ribosyl)imidazole-4-carboxylate + L-aspartate + ATP = (2S)-2-[5-amino-1-(5-phospho-beta-D-ribosyl)imidazole-4-carboxamido]succinate + ADP + phosphate + 2 H(+). It participates in purine metabolism; IMP biosynthesis via de novo pathway; 5-amino-1-(5-phospho-D-ribosyl)imidazole-4-carboxamide from 5-amino-1-(5-phospho-D-ribosyl)imidazole-4-carboxylate: step 1/2. The polypeptide is Phosphoribosylaminoimidazole-succinocarboxamide synthase (purC) (Lactococcus lactis subsp. cremoris (Streptococcus cremoris)).